The chain runs to 378 residues: MKNKTEVKNGGEKKNSKKVSKEESAKEKNEKMKIVKNLIDKGKKSGSLTYKEIMDELQEVDLGPEQIEKIYEVLESVGVDVVGDMHEIEVEEEDLDLTIPEGIAIDDPVRMYLKEIGKVPLLSPEEEIDLAQRIKNGDRSARKKLAEANLRLVVSIAKRYVGRGMLFLDLIQEGNLGLIKAVEKFDFKKGFKFSTYATWWIRQAITRAIADQARTIRIPVHMVETINKLIRVSRQLLQELGREPQPEEIAKIMDMPVDKVREIMKIAQEPVSLETPIGEEEDSHLGDFIPDDEAPAPADAAAFRMLKEQLLKILNTLTPREEKVLRLRFGLDDGRARTLEEVGKEFNVTRERIRQIEAKALRKLRHPSRSKKLKDYLD.

A disordered region spans residues Met1 to Asn29. The sigma-70 factor domain-2 stretch occupies residues Leu145–Thr215. Positions Asp169 to Gln172 match the Interaction with polymerase core subunit RpoC motif. Positions Glu224–Ala300 are sigma-70 factor domain-3. Residues Ile313–His366 are sigma-70 factor domain-4. The segment at residues Leu339 to Ala358 is a DNA-binding region (H-T-H motif).

The protein belongs to the sigma-70 factor family. RpoD/SigA subfamily. In terms of assembly, interacts transiently with the RNA polymerase catalytic core.

Its subcellular location is the cytoplasm. In terms of biological role, sigma factors are initiation factors that promote the attachment of RNA polymerase to specific initiation sites and are then released. This sigma factor is the primary sigma factor during exponential growth. This chain is RNA polymerase sigma factor SigA, found in Clostridium acetobutylicum (strain ATCC 824 / DSM 792 / JCM 1419 / IAM 19013 / LMG 5710 / NBRC 13948 / NRRL B-527 / VKM B-1787 / 2291 / W).